Consider the following 268-residue polypeptide: tRNA pseudouridine synthase A (268 aa).

Asp-52 (nucleophile) is an active-site residue. Tyr-110 contributes to the substrate binding site.

Belongs to the tRNA pseudouridine synthase TruA family. As to quaternary structure, homodimer.

The enzyme catalyses uridine(38/39/40) in tRNA = pseudouridine(38/39/40) in tRNA. Formation of pseudouridine at positions 38, 39 and 40 in the anticodon stem and loop of transfer RNAs. In Prochlorococcus marinus (strain AS9601), this protein is tRNA pseudouridine synthase A.